The primary structure comprises 274 residues: Large ribosomal subunit protein uL2 (274 aa).

The tract at residues 195-274 is disordered; sequence VGNSDHGLER…SKYIIERRKK (80 aa). Composition is skewed to basic residues over residues 207-220 and 244-264; these read KAGR…RPRN and PRSR…KKQS.

Belongs to the universal ribosomal protein uL2 family. In terms of assembly, part of the 50S ribosomal subunit. Forms a bridge to the 30S subunit in the 70S ribosome.

In terms of biological role, one of the primary rRNA binding proteins. Required for association of the 30S and 50S subunits to form the 70S ribosome, for tRNA binding and peptide bond formation. It has been suggested to have peptidyltransferase activity; this is somewhat controversial. Makes several contacts with the 16S rRNA in the 70S ribosome. This Bacteroides thetaiotaomicron (strain ATCC 29148 / DSM 2079 / JCM 5827 / CCUG 10774 / NCTC 10582 / VPI-5482 / E50) protein is Large ribosomal subunit protein uL2.